The following is a 161-amino-acid chain: Nucleotide-binding protein Mmc1_1670 (161 aa).

Belongs to the YajQ family.

Functionally, nucleotide-binding protein. The polypeptide is Nucleotide-binding protein Mmc1_1670 (Magnetococcus marinus (strain ATCC BAA-1437 / JCM 17883 / MC-1)).